We begin with the raw amino-acid sequence, 78 residues long: Small ribosomal subunit protein bS16c (78 aa).

Belongs to the bacterial ribosomal protein bS16 family.

The protein localises to the plastid. It is found in the chloroplast. The sequence is that of Small ribosomal subunit protein bS16c from Chara vulgaris (Common stonewort).